Consider the following 289-residue polypeptide: 5'-adenylylsulfate reductase-like 7 (289 aa).

Residues 1–23 (MNLWVSIFLVSAIAGSCLPSGFA) form the signal peptide. The region spanning 37 to 157 (SVIEQKCPRS…LIQFYKETTG (121 aa)) is the Thioredoxin domain. Residues Asn-132 and Asn-184 are each glycosylated (N-linked (GlcNAc...) asparagine). Residues 198-218 (MVLALMFLSLKLAILIFPIMG) form a helical membrane-spanning segment.

It is found in the membrane. The protein is 5'-adenylylsulfate reductase-like 7 (APRL7) of Arabidopsis thaliana (Mouse-ear cress).